We begin with the raw amino-acid sequence, 335 residues long: Karyogamy protein KAR4 (335 aa).

The segment at 1–25 (MAFQDPTYDQNKSRHINNSHLQGPN) is disordered. A compositionally biased stretch (polar residues) spans 16–25 (INNSHLQGPN).

Belongs to the MT-A70-like family. As to quaternary structure, component of the MIS (mRNA N6-methyladenosine (m6A) methylation) complex, at least composed of IME4, KAR4, MUM2, SLZ1, and VIR1. Interacts with VIR1.

It localises to the nucleus. The protein resides in the cytoplasm. Its function is as follows. Component of the MIS complex, a complex that mediates N6-methyladenosine (m6A) methylation of meiotic mRNAs and is required for initiation of meiosis, progression through the meiotic divisions and sporulation. May assist STE12 in the pheromone-dependent expression of KAR3 and CIK1. This is Karyogamy protein KAR4 (KAR4) from Saccharomyces cerevisiae (strain ATCC 204508 / S288c) (Baker's yeast).